We begin with the raw amino-acid sequence, 388 residues long: Chalcone synthase (388 aa).

The active site involves C164.

It belongs to the thiolase-like superfamily. Chalcone/stilbene synthases family.

It catalyses the reaction (E)-4-coumaroyl-CoA + 3 malonyl-CoA + 3 H(+) = 2',4,4',6'-tetrahydroxychalcone + 3 CO2 + 4 CoA. It functions in the pathway secondary metabolite biosynthesis; flavonoid biosynthesis. Functionally, the primary product of this enzyme is 4,2',4',6'-tetrahydroxychalcone (also termed naringenin-chalcone or chalcone) which can under specific conditions spontaneously isomerize into naringenin. This Vigna unguiculata (Cowpea) protein is Chalcone synthase (CHS).